We begin with the raw amino-acid sequence, 773 residues long: DC-STAMP domain-containing protein 2 (773 aa).

Over 1–26 (MPKVMKDVVHPLGGEEPSMARAVVRS) the chain is Cytoplasmic. A helical membrane pass occupies residues 27–47 (VGGFTLGLSLATAYGLLELLV). The Extracellular portion of the chain corresponds to 48-51 (EGHS). Residues 52 to 72 (PWGCLVGTLTLAAFLSLGMGF) traverse the membrane as a helical segment. The Cytoplasmic portion of the chain corresponds to 73–233 (SRQVRATVLL…IPQAYHLCYV (161 aa)). Residues 234–254 (LMPFKLALCGLASLVQVFCVI) traverse the membrane as a helical segment. At 255–322 (PKYIQPFLRQ…SMKLHRVREA (68 aa)) the chain is on the extracellular side. Residues asparagine 284 and asparagine 296 are each glycosylated (N-linked (GlcNAc...) asparagine). Residues 323 to 343 (LALMGFTTPLLLVLLYLQALF) form a helical membrane-spanning segment. The Cytoplasmic segment spans residues 344 to 415 (YRYCYLNWDH…ILETFNLIRH (72 aa)). The chain crosses the membrane as a helical span at residues 416–436 (LLLVLFLVFLDYAVFWVLDLA). The Extracellular portion of the chain corresponds to 437–499 (RHQLQGEIVA…LRPSEPDSTG (63 aa)). Asparagine 480 carries an N-linked (GlcNAc...) asparagine glycan. Residues 500–520 (YIVIGVMYGLCFFITLFGSYV) form a helical membrane-spanning segment. At 521–773 (SRLRRVICAS…LPDPSHPPPK (253 aa)) the chain is on the cytoplasmic side. Over residues 692-701 (SLSMESTSES) the composition is skewed to low complexity. The tract at residues 692–773 (SLSMESTSES…LPDPSHPPPK (82 aa)) is disordered. Residues 758 to 773 (PLSPPSLPDPSHPPPK) show a composition bias toward pro residues.

Interacts with DCST1.

Its subcellular location is the cytoplasmic vesicle. The protein localises to the secretory vesicle. It is found in the acrosome membrane. Its function is as follows. Essential sperm cell-surface protein required for sperm-egg fusion and fertilization. The polypeptide is DC-STAMP domain-containing protein 2 (DCST2) (Homo sapiens (Human)).